Consider the following 130-residue polypeptide: Small ribosomal subunit protein uS8 (130 aa).

Belongs to the universal ribosomal protein uS8 family. As to quaternary structure, part of the 30S ribosomal subunit.

Its function is as follows. One of the primary rRNA binding proteins, it binds directly to 16S rRNA central domain where it helps coordinate assembly of the platform of the 30S subunit. This Thermococcus kodakarensis (strain ATCC BAA-918 / JCM 12380 / KOD1) (Pyrococcus kodakaraensis (strain KOD1)) protein is Small ribosomal subunit protein uS8.